A 470-amino-acid chain; its full sequence is D-serine/D-alanine/glycine transporter (470 aa).

12 helical membrane-spanning segments follow: residues 30–50, 51–71, 102–122, 137–157, 162–182, 211–231, 256–276, 283–303, 350–370, 371–391, 413–433, and 441–461; these read LIAIGGAIGTGLFMGSGKTIS, LAGPSIIFVYMIIGFMLFFVM, FTGWTYWFCWVVTGMADVVAI, VASLAVIVLLLTLNLATVKMF, FWFAMIKIVAIVSLIVVGLVM, LSGFFAGFQIAVFAFVGIELV, IIMFYVFALIVIMSVTPWSSV, FVELFVLVGLPAAASVINFVV, FSCICLLGGVVMLYVNPSVIG, AFTMITTVSAILFMFVWTIIL, PLGKLMCWVCMAFFVFVVVLL, and QALLVTPLWFIALGLGWLFIG.

It belongs to the amino acid-polyamine-organocation (APC) superfamily. Amino acid transporter (AAT) (TC 2.A.3.1) family.

It localises to the cell inner membrane. The catalysed reaction is D-alanine(in) + H(+)(in) = D-alanine(out) + H(+)(out). It carries out the reaction D-serine(out) + H(+)(out) = D-serine(in) + H(+)(in). It catalyses the reaction glycine(in) + H(+)(in) = glycine(out) + H(+)(out). Functionally, permease that is involved in the transport across the cytoplasmic membrane of D-alanine, D-serine and glycine. This is D-serine/D-alanine/glycine transporter (cycA) from Escherichia coli O157:H7.